Consider the following 314-residue polypeptide: 1,4-dihydroxy-2-naphthoyl-CoA synthase (314 aa).

Substrate contacts are provided by residues Arg58, 103 to 107, Tyr115, 157 to 161, Thr184, Ser190, Tyr287, and Lys302; these read SGGDQ and WAAGG.

Belongs to the enoyl-CoA hydratase/isomerase family. MenB subfamily.

It catalyses the reaction 2-succinylbenzoyl-CoA + H(+) = 1,4-dihydroxy-2-naphthoyl-CoA + H2O. It functions in the pathway quinol/quinone metabolism; 1,4-dihydroxy-2-naphthoate biosynthesis; 1,4-dihydroxy-2-naphthoate from chorismate: step 6/7. The protein operates within quinol/quinone metabolism; menaquinone biosynthesis. Converts o-succinylbenzoyl-CoA (OSB-CoA) to 1,4-dihydroxy-2-naphthoyl-CoA (DHNA-CoA). The polypeptide is 1,4-dihydroxy-2-naphthoyl-CoA synthase (Mycobacterium tuberculosis (strain CDC 1551 / Oshkosh)).